A 197-amino-acid chain; its full sequence is Stanniocalcin-2 (197 aa).

Residues 1-20 are disordered; that stretch reads TDAXNPPEGPQDRGSQQKGR.

It belongs to the stanniocalcin family. In terms of assembly, homodimer; disulfide-linked.

Its subcellular location is the secreted. Functionally, has an anti-hypocalcemic action on calcium and phosphate homeostasis. This chain is Stanniocalcin-2 (STC2), found in Cavia porcellus (Guinea pig).